A 43-amino-acid polypeptide reads, in one-letter code: Protein PsbN (43 aa).

A helical transmembrane segment spans residues 3-23 (IATLVAIFISGLLVSFTGYAL).

The protein belongs to the PsbN family.

Its subcellular location is the plastid. It is found in the chloroplast thylakoid membrane. Its function is as follows. May play a role in photosystem I and II biogenesis. The sequence is that of Protein PsbN from Euonymus alatus (Burning bush).